A 389-amino-acid chain; its full sequence is Chalcone synthase E (389 aa).

The active site involves Cys164.

It belongs to the thiolase-like superfamily. Chalcone/stilbene synthases family.

It catalyses the reaction (E)-4-coumaroyl-CoA + 3 malonyl-CoA + 3 H(+) = 2',4,4',6'-tetrahydroxychalcone + 3 CO2 + 4 CoA. Its pathway is secondary metabolite biosynthesis; flavonoid biosynthesis. Its function is as follows. The primary product of this enzyme is 4,2',4',6'-tetrahydroxychalcone (also termed naringenin-chalcone or chalcone) which can under specific conditions spontaneously isomerize into naringenin. The polypeptide is Chalcone synthase E (CHSE) (Ipomoea purpurea (Common morning glory)).